The primary structure comprises 431 residues: Ribosomal RNA small subunit methyltransferase B (431 aa).

S-adenosyl-L-methionine contacts are provided by residues 254–260 (CAAPGGK), Asp-277, Asp-303, and Asp-322. The active-site Nucleophile is the Cys-375. The segment at 398 to 417 (LHATGTPASPGQQNLPGPEE) is disordered. A compositionally biased stretch (polar residues) spans 403–412 (TPASPGQQNL).

The protein belongs to the class I-like SAM-binding methyltransferase superfamily. RsmB/NOP family.

It localises to the cytoplasm. It catalyses the reaction cytidine(967) in 16S rRNA + S-adenosyl-L-methionine = 5-methylcytidine(967) in 16S rRNA + S-adenosyl-L-homocysteine + H(+). Functionally, specifically methylates the cytosine at position 967 (m5C967) of 16S rRNA. The polypeptide is Ribosomal RNA small subunit methyltransferase B (Klebsiella pneumoniae (strain 342)).